A 543-amino-acid polypeptide reads, in one-letter code: Steroid receptor seven-up, isoforms B/C (543 aa).

The segment at 38–191 (PPHSAWHEPP…HSQSSNSGSQ (154 aa)) is disordered. Residues 56 to 68 (AASAGPGTTTGSV) show a composition bias toward low complexity. Over residues 83-101 (QQSAVIKQDLSCPSLNQAG) the composition is skewed to polar residues. The segment covering 122 to 141 (GSAGGHHSGSGSGSGSGVNP) has biased composition (gly residues). The segment covering 158–170 (MLTSIKGQPTGCG) has biased composition (polar residues). A compositionally biased stretch (low complexity) spans 171-191 (STTPSSQANSSHSQSSNSGSQ). Residues 197–272 (NIECVVCGDK…MGMRREAVQR (76 aa)) constitute a DNA-binding region (nuclear receptor). NR C4-type zinc fingers lie at residues 200-220 (CVVC…CEGC) and 236-260 (CRGS…LKKC). Positions 307–532 (YLSSYISLLL…TLIRDMLLSG (226 aa)) constitute an NR LBD domain.

It belongs to the nuclear hormone receptor family. NR2 subfamily. As to expression, expressed in several embryonic tissues; dorsal vessel, oenocyte and fat body. CNS expression is dynamic and confined to temporally restricted subsections of the NB lineage; expressed in many NB and GMCs, but only a small number of neurons.

The protein localises to the nucleus. Receptor that is required in photoreceptors R1, R3, R4 and R6 during eye development; generation of the ganglion mother cell-2 (GMC-2) fate in the nb7-3 lineage, coinciding with the transition in the expression of HB to KR in the neuroblasts (NBs). The sequence is that of Steroid receptor seven-up, isoforms B/C (svp) from Drosophila melanogaster (Fruit fly).